The primary structure comprises 478 residues: Protein nucleotidyltransferase YdiU (478 aa).

The ATP site is built by Gly-84, Gly-86, Arg-87, Lys-107, Asp-119, Gly-120, Arg-170, and Arg-177. Asp-246 acts as the Proton acceptor in catalysis. Mg(2+)-binding residues include Asn-247 and Asp-256. Residue Asp-256 coordinates ATP.

The protein belongs to the SELO family. The cofactor is Mg(2+). Mn(2+) serves as cofactor.

The enzyme catalyses L-seryl-[protein] + ATP = 3-O-(5'-adenylyl)-L-seryl-[protein] + diphosphate. It carries out the reaction L-threonyl-[protein] + ATP = 3-O-(5'-adenylyl)-L-threonyl-[protein] + diphosphate. It catalyses the reaction L-tyrosyl-[protein] + ATP = O-(5'-adenylyl)-L-tyrosyl-[protein] + diphosphate. The catalysed reaction is L-histidyl-[protein] + UTP = N(tele)-(5'-uridylyl)-L-histidyl-[protein] + diphosphate. The enzyme catalyses L-seryl-[protein] + UTP = O-(5'-uridylyl)-L-seryl-[protein] + diphosphate. It carries out the reaction L-tyrosyl-[protein] + UTP = O-(5'-uridylyl)-L-tyrosyl-[protein] + diphosphate. In terms of biological role, nucleotidyltransferase involved in the post-translational modification of proteins. It can catalyze the addition of adenosine monophosphate (AMP) or uridine monophosphate (UMP) to a protein, resulting in modifications known as AMPylation and UMPylation. The chain is Protein nucleotidyltransferase YdiU from Escherichia coli (strain K12 / MC4100 / BW2952).